The sequence spans 444 residues: Prenyltransferase phnF (444 aa).

Belongs to the tryptophan dimethylallyltransferase family.

It catalyses the reaction 2,3,4,7,9-pentahydroxy-6-methyl-1H-phenalen-1-one + dimethylallyl diphosphate = 2,4,7,9-tetrahydroxy-6-methyl-8-(2-methylbut-3-en-2-yl)-1-oxo-1H-phenalen-3-ol + diphosphate. Its pathway is secondary metabolite biosynthesis. In terms of biological role, prenyltransferase; part of the gene cluster that mediates the biosynthesis of phenalenones such as herqueinone, compounds that have been reported to treat tumors, bacterial infections and/or mycoses, and rheumatic diseases. The non-reducing polyketide synthase phnA synthesizes the heptaketide backbone and cyclizes it into the angular, hemiketal-containing naphtho-gamma-pyrone prephenalenone. The product template (PT) domain of phnA catalyzes only the C4-C9 aldol condensation, which is unprecedented among known PT domains. The transformation of prephenalenone to phenalenones requires an FAD-dependent monooxygenase phnB, which catalyzes the C2 aromatic hydroxylation of prephenalenone and ring opening of the gamma-pyrone ring simultaneously. Subsequent intramolecular deprotonation of C3 phenolic oxygen accelerates phenalenone ring closure to yield the tricyclic phenalenone core with a C2 hydroxylation. The prenyltransferase phnF further catalyzes reverse C-prenylation of phenalenone by direct electrophilic substitution at C6, or possibly via first a forward O-prenylation of a neighboring phenol in phenalenone, followed by a Claisen rearrangement. The hydroalkoxylation enzyme phnH catalyzes the 5-exo-trig cyclization via acid catalysis after the spontaneous deprotonation of 7-OH, which leads to the formation of the dihydrobenzofuran atrovenetin. Atrovenetin is further converted to deoxyherqueinone by the O-methyltransferase phnC which can methylate C2-OH to stabilize the northern portion of the phenalenone core. Finally, the oxidoreductase phnG converts deoxyherqueinone to herqueinone via C6 hydroxylation. The polypeptide is Prenyltransferase phnF (Penicillium herquei).